The chain runs to 262 residues: RNA-binding protein 7 (262 aa).

Glycine 2 carries the N-acetylglycine modification. In terms of domain architecture, RRM spans 10 to 87 (RTLFVGNLET…RPIKIQFRAG (78 aa)). 2 ZCCHC8 binding regions span residues 25-35 (LLFELFHQAGP) and 59-76 (HEVSVPYAMNLLNGIKLF). Residues 95-121 (VSLSYPQHHVGNSSPTSTSPSRTVDNM) are disordered. Phosphoserine occurs at positions 133 and 134. Arginine 149 carries the post-translational modification Omega-N-methylarginine. Disordered regions lie at residues 159 to 212 (SPHL…HYSR) and 242 to 262 (SHDYDNRRDSGRNGKWRSSRH). The segment covering 165–194 (SGFSPSAQSHNHTFNQSSSSQWRQDTPSSQ) has biased composition (polar residues). Serine 201 carries the phosphoserine modification. Positions 242 to 253 (SHDYDNRRDSGR) are enriched in basic and acidic residues.

In terms of assembly, component of the nuclear exosome targeting (NEXT) complex composed of MTREX, ZCCHC8, and RBM7 that directs a subset of non-coding short-lived RNAs for exosomal degradation. Interacts with ZCCHC8 and SF3B2/SAP145. Binds to MTREX through ZCCHC8. Interacts with YWHAE and YWHAZ; these interactions are stress-dependent and RBM7 phosphorylation dependent; release RNA from the NEXT complex and may affect RNA targeting to the nuclear RNA exosomome for degradation. Interacts with MEPCE and LARP7, the core subunits of 7SK snRNP; upon genotoxic stress this interaction is enhanced, triggering the release of inactive P-TEFb complex from the core and P-TEFb complex activation. In terms of processing, phosphorylated at Ser-133 by MAPK14/p38-alpha-activated MAPKAPK2/MK2; this phosphorylation is stress-dependent; this phosphorylation decreases its RNA-binding capacity therefore affecting RNA nuclear exosome-mediated degradation. This phosphorylation mediates YWHAE and YWHAZ interactions.

The protein resides in the nucleus. It localises to the nucleoplasm. Its function is as follows. RNA-binding subunit of the trimeric nuclear exosome targeting (NEXT) complex, a complex that functions as an RNA exosome cofactor that directs a subset of non-coding short-lived RNAs for exosomal degradation. NEXT is involved in surveillance and turnover of aberrant transcripts and non-coding RNAs. Binds preferentially polyuridine sequences and associates with newly synthesized RNAs, including pre-mRNAs and short-lived exosome substrates such as promoter upstream transcripts (PROMPTs), enhancer RNAs (eRNAs), and 3'-extended products from small nuclear RNAs (snRNAs). Participates in several biological processes including DNA damage response (DDR) and stress response. During stress response, activation of the p38MAPK-MK2 pathway decreases RBM7-RNA-binding and subsequently the RNA exosome degradation activities, thereby modulating the turnover of non-coding transcriptome. Participates in DNA damage response (DDR), through its interaction with MEPCE and LARP7, the core subunits of 7SK snRNP complex, that release the positive transcription elongation factor b (P-TEFb) complex from the 7SK snRNP. In turn, activation of P-TEFb complex induces the transcription of P-TEFb-dependent DDR genes to promote cell viability. The polypeptide is RNA-binding protein 7 (Bos taurus (Bovine)).